The chain runs to 752 residues: MALLAIHSWRWAAAAVAFEKHKHSAVLTRSLVSICGSGLRWSSYQSGASGSARLSQTTESLRNSTQQRWEKNNSRQLLDASKVLQAWPLIEKRTCWHGHAGGGLHTDPKEGLKDVDTRKIIKAMLSYVWPKDRPDLRARVAISLGFLGGAKAMNIVVPFMFKYAVDSLNQMSGNMLNLSDAPNTVATMATAVLIGYGVSRAGAAFFNEVRNAVFGKVAQNSIRRIAKNVFLHLHNLDLGFHLSRQTGALSKAIDRGTRGISFVLSALVFNLLPIVFEMTLVSSVLYYKCGAQFALVTLGTLGAYTAFTVAVTRWRTRFRIEMNKADNDAGNAAIDSLLNYETVKYFNNEKYEAQRYDGFLKTYETASLKSTSTLAMLNFGQSAIFSVGLTAIMVLASQGIVAGALTVGDLVMVNGLLFQLSLPLNFLGTVYRETRQALIDMNTLFTLLKVDTRIKDKAMASPLQITPQTATVAFDNVHFEYIEGQKVLSGVSFEVPAGKKVAIVGGSGSGKSTIVRLLFRFYEPQKGSIYLAGQNIQDVSLESLRRAVGVVPQDAVLFHNTIYYNLLYGNINASPEEVYAVAKLAGLHDAILRMPHGYDTQVGERGLKLSGGEKQRVAIARAILKDPPVILYDEATSSLDSITEETILGAMRDVVKHRTSIFIAHRLSTVVDADEIIVLSQGKVAERGTHYGLLANSSSIYSEMWHTQSTRIQNHDNLGWDAKKESLSKEEERKKLQEEIVNSVKGCGNCSC.

A mitochondrion-targeting transit peptide spans methionine 1–lysine 22. Over histidine 23–valine 140 the chain is Mitochondrial matrix. The 297-residue stretch at valine 140–glutamine 436 folds into the ABC transmembrane type-1 domain. Residues alanine 141 to phenylalanine 161 traverse the membrane as a helical segment. At lysine 162–valine 185 the chain is on the mitochondrial intermembrane side. A helical membrane pass occupies residues alanine 186–phenylalanine 206. The Mitochondrial matrix portion of the chain corresponds to asparagine 207–glycine 259. N6-acetyllysine occurs at positions 216 and 251. A helical transmembrane segment spans residues isoleucine 260–leucine 280. The Mitochondrial intermembrane portion of the chain corresponds to valine 281 to glycine 290. A helical membrane pass occupies residues alanine 291–valine 311. Residues threonine 312–serine 382 are Mitochondrial matrix-facing. Arginine 315–arginine 319 lines the glutathione pocket. A Phosphoserine modification is found at serine 336. Residue tyrosine 340 is modified to Phosphotyrosine. Threonine 342 carries the phosphothreonine modification. Lysine 350 carries the N6-acetyllysine modification. Residue asparagine 378–glutamine 381 coordinates glutathione. A helical transmembrane segment spans residues alanine 383–glycine 403. At alanine 404–aspartate 409 the chain is on the mitochondrial intermembrane side. A helical transmembrane segment spans residues leucine 410–valine 430. A glutathione-binding site is contributed by glycine 428. Residues tyrosine 431–cysteine 752 are Mitochondrial matrix-facing. In terms of domain architecture, ABC transporter spans valine 472–histidine 706. Residues tyrosine 481 and glycine 505 to arginine 516 each bind ATP.

It belongs to the ABC transporter superfamily. ABCB family. Heavy Metal importer (TC 3.A.1.210) subfamily. Homodimer or heterodimer. Interacts with C10orf88/PAAT. Forms a complex with ABCB10 and FECH, where a dimeric FECH bridges ABCB7 and ABCB10 homodimers; this complex may be required for cellular iron homeostasis, mitochondrial function and heme biosynthesis. Interacts with FECH. Interacts with ATP5F1A. Interacts with COX4I1; this interaction allows the regulation of cellular iron homeostasis and cellular reactive oxygen species (ROS) levels in cardiomyocytes.

It is found in the mitochondrion inner membrane. It carries out the reaction (glutathione)4[2Fe(III)-2S] cluster(in) + ATP + H2O = (glutathione)4[2Fe(III)-2S] cluster(out) + ADP + phosphate + H(+). Functionally, exports glutathione-coordinated iron-sulfur clusters such as [2Fe-2S]-(GS)4 cluster from the mitochondria to the cytosol in an ATP-dependent manner allowing the assembly of the cytosolic iron-sulfur (Fe/S) cluster-containing proteins and participates in iron homeostasis. Moreover, through a functional complex formed of ABCB7, FECH and ABCB10, also plays a role in the cellular iron homeostasis, mitochondrial function and heme biosynthesis. In cardiomyocytes, regulates cellular iron homeostasis and cellular reactive oxygen species (ROS) levels through its interaction with COX4I1. May also play a role in hematopoiesis. This Rattus norvegicus (Rat) protein is Iron-sulfur clusters transporter ABCB7, mitochondrial.